Reading from the N-terminus, the 405-residue chain is NADH-quinone oxidoreductase subunit D (405 aa).

It belongs to the complex I 49 kDa subunit family. In terms of assembly, NDH-1 is composed of 14 different subunits. Subunits NuoB, C, D, E, F, and G constitute the peripheral sector of the complex.

It is found in the cell inner membrane. The catalysed reaction is a quinone + NADH + 5 H(+)(in) = a quinol + NAD(+) + 4 H(+)(out). NDH-1 shuttles electrons from NADH, via FMN and iron-sulfur (Fe-S) centers, to quinones in the respiratory chain. The immediate electron acceptor for the enzyme in this species is believed to be ubiquinone. Couples the redox reaction to proton translocation (for every two electrons transferred, four hydrogen ions are translocated across the cytoplasmic membrane), and thus conserves the redox energy in a proton gradient. This is NADH-quinone oxidoreductase subunit D from Ruegeria pomeroyi (strain ATCC 700808 / DSM 15171 / DSS-3) (Silicibacter pomeroyi).